The primary structure comprises 411 residues: Citrate synthase (411 aa).

Residues histidine 304 and aspartate 363 contribute to the active site.

The protein belongs to the citrate synthase family.

It catalyses the reaction oxaloacetate + acetyl-CoA + H2O = citrate + CoA + H(+). It functions in the pathway carbohydrate metabolism; tricarboxylic acid cycle; isocitrate from oxaloacetate: step 1/2. The chain is Citrate synthase (gltA) from Rickettsia massiliae.